A 350-amino-acid chain; its full sequence is Lipase chaperone (350 aa).

Residues 12–32 (IVLYLILGCVVVCGVWYSFDV) form a helical membrane-spanning segment.

Belongs to the lipase chaperone family.

It is found in the cell inner membrane. May be involved in the folding of the extracellular lipase during its passage through the periplasm. The chain is Lipase chaperone (lifO) from Xylella fastidiosa (strain 9a5c).